The sequence spans 207 residues: dITP/XTP pyrophosphatase (207 aa).

16–21 (SNNKGK) serves as a coordination point for substrate. Aspartate 79 serves as the catalytic Proton acceptor. Aspartate 79 serves as a coordination point for Mg(2+). Residues serine 80, 166-169 (FGYD), lysine 189, and 194-195 (HR) each bind substrate.

The protein belongs to the HAM1 NTPase family. In terms of assembly, homodimer. Mg(2+) is required as a cofactor.

It catalyses the reaction XTP + H2O = XMP + diphosphate + H(+). The enzyme catalyses dITP + H2O = dIMP + diphosphate + H(+). It carries out the reaction ITP + H2O = IMP + diphosphate + H(+). Pyrophosphatase that catalyzes the hydrolysis of nucleoside triphosphates to their monophosphate derivatives, with a high preference for the non-canonical purine nucleotides XTP (xanthosine triphosphate), dITP (deoxyinosine triphosphate) and ITP. Seems to function as a house-cleaning enzyme that removes non-canonical purine nucleotides from the nucleotide pool, thus preventing their incorporation into DNA/RNA and avoiding chromosomal lesions. The polypeptide is dITP/XTP pyrophosphatase (Acinetobacter baumannii (strain ATCC 17978 / DSM 105126 / CIP 53.77 / LMG 1025 / NCDC KC755 / 5377)).